The sequence spans 292 residues: Aquaporin-3 (292 aa).

The Cytoplasmic portion of the chain corresponds to 1–24; the sequence is MGRQKELMNRCGEMLHIRYRLLRQ. Residues 25 to 42 traverse the membrane as a helical segment; sequence ALAECLGTLILVMFGCGS. At 43 to 56 the chain is on the extracellular side; it reads VAQVVLSRGTHGGF. Residues 57–74 traverse the membrane as a helical segment; that stretch reads LTINLAFGFAVTLAILVA. Topologically, residues 75–78 are cytoplasmic; it reads GQVS. An intramembrane region (discontinuously helical) is located at residues 79-92; that stretch reads GAHLNPAVTFAMCF. An NPA 1 motif is present at residues 83–85; the sequence is NPA. The Cytoplasmic segment spans residues 93–100; sequence LAREPWIK. A helical transmembrane segment spans residues 101 to 121; it reads LPIYTLAQTLGAFLGAGIVFG. The Extracellular segment spans residues 122 to 159; the sequence is LYYDAIWAFAGNELVVSGPNGTAGIFATYPSGHLDMVN. Asn-141 carries N-linked (GlcNAc...) asparagine glycosylation. The chain crosses the membrane as a helical span at residues 160 to 177; it reads GFFDQFIGTAALIVCVLA. The Cytoplasmic portion of the chain corresponds to 178 to 189; it reads IVDPYNNPVPRG. Residues 190–206 form a helical membrane-spanning segment; that stretch reads LEAFTVGLVVLVIGTSM. The Extracellular segment spans residues 207–210; that stretch reads GFNS. Positions 211–224 form an intramembrane region, discontinuously helical; the sequence is GYAVNPARDFGPRL. The short motif at 215-217 is the NPA 2 element; it reads NPA. Topologically, residues 225–242 are extracellular; the sequence is FTALAGWGSEVFTTGQNW. The helical transmembrane segment at 243 to 264 threads the bilayer; sequence WWVPIVSPLLGSIGGVFVYQLM. Topologically, residues 265 to 292 are cytoplasmic; it reads IGCHLEQPPPSTEAENVKLAHMKHKEQI.

It belongs to the MIP/aquaporin (TC 1.A.8) family. As to quaternary structure, homotetramer; each monomer provides an independent glycerol/water pore. Could also exist in other oligomeric states. Detected in kidney medulla and papilla, in collecting duct cells. Detected in colon.

It is found in the cell membrane. The protein resides in the basolateral cell membrane. It catalyses the reaction glycerol(in) = glycerol(out). It carries out the reaction H2O(in) = H2O(out). The catalysed reaction is urea(in) = urea(out). The enzyme catalyses H2O2(out) = H2O2(in). With respect to regulation, channel activity is inhibited by mercury ions. Its function is as follows. Aquaglyceroporins form homotetrameric transmembrane channels, with each monomer independently mediating glycerol and water transport across the plasma membrane along their osmotic gradient. Could also be permeable to urea. Also participates in cell permeability to H2O2 and H2O2-mediated signaling. In skin, transports glycerol to the epidermis and stratum corneum, where it maintains hydration, elasticity, and supports lipid biosynthesis for barrier repair. In kidney, contributes to the reabsorption of water, helping the body maintain proper fluid balance. The sequence is that of Aquaporin-3 from Rattus norvegicus (Rat).